We begin with the raw amino-acid sequence, 338 residues long: Eukaryotic translation initiation factor 3 subunit H (338 aa).

Residues 22 to 154 (VQCDGLAVMK…LKAYRLTPQA (133 aa)) form the MPN domain.

The protein belongs to the eIF-3 subunit H family. Component of the eukaryotic translation initiation factor 3 (eIF-3) complex. The eIF-3 complex interacts with pix. Interacts with mxt.

The protein localises to the cytoplasm. Its function is as follows. Component of the eukaryotic translation initiation factor 3 (eIF-3) complex, which is involved in protein synthesis of a specialized repertoire of mRNAs and, together with other initiation factors, stimulates binding of mRNA and methionyl-tRNAi to the 40S ribosome. The eIF-3 complex specifically targets and initiates translation of a subset of mRNAs involved in cell proliferation. This chain is Eukaryotic translation initiation factor 3 subunit H, found in Drosophila melanogaster (Fruit fly).